Reading from the N-terminus, the 143-residue chain is Crossover junction endodeoxyribonuclease Hjc (143 aa).

Mg(2+) is bound at residue glutamate 11. Serine 31 is an active-site residue. Aspartate 41 and glutamate 54 together coordinate Mg(2+).

Belongs to the Holliday junction resolvase Hjc family. In terms of assembly, homodimer. Requires Mg(2+) as cofactor.

The enzyme catalyses Endonucleolytic cleavage at a junction such as a reciprocal single-stranded crossover between two homologous DNA duplexes (Holliday junction).. In terms of biological role, a structure-specific endonuclease that resolves Holliday junction (HJ) intermediates during genetic recombination. Cleaves 4-way DNA junctions introducing paired nicks in opposing strands, leaving a 5'-terminal phosphate and a 3'-terminal hydroxyl group that are ligated to produce recombinant products. Functionally, redundant function with Holliday junction resolvase Hje. The chain is Crossover junction endodeoxyribonuclease Hjc from Sulfolobus acidocaldarius (strain ATCC 33909 / DSM 639 / JCM 8929 / NBRC 15157 / NCIMB 11770).